We begin with the raw amino-acid sequence, 990 residues long: Storkhead-box protein 1 (990 aa).

A compositionally biased stretch (basic and acidic residues) spans 396-408; sequence TTRHKDSSKEVIG. 4 disordered regions span residues 396–471, 562–586, 712–736, and 809–832; these read TTRH…VHHL, VAKA…PRRV, GLSD…DGGC, and LFSN…SRIP. Basic residues predominate over residues 416–431; sequence KSRRRGSSHKGRHKAR. A compositionally biased stretch (polar residues) spans 809-830; sequence LFSNAGESPNPDLSDNPGQNSR.

Detected in sensory epithelial cells of the inner ear but not in adjacent surrounding tissue (at protein level).

It is found in the nucleus. It localises to the cytoplasm. Its subcellular location is the cytoskeleton. The protein localises to the microtubule organizing center. The protein resides in the centrosome. In terms of biological role, involved in regulating the levels of reactive oxidative species and reactive nitrogen species and in mitochondrial homeostasis in the placenta. Required for regulation of inner ear epithelial cell proliferation via the AKT signaling pathway. Involved in cell cycle regulation by binding to the CCNB1 promoter, up-regulating its expression and promoting mitotic entry. Induces phosphorylation of MAPT/tau. This Mus musculus (Mouse) protein is Storkhead-box protein 1.